The primary structure comprises 116 residues: Large ribosomal subunit protein uL24 (116 aa).

Belongs to the universal ribosomal protein uL24 family. Part of the 50S ribosomal subunit.

Functionally, one of two assembly initiator proteins, it binds directly to the 5'-end of the 23S rRNA, where it nucleates assembly of the 50S subunit. Its function is as follows. Located at the polypeptide exit tunnel on the outside of the subunit. This chain is Large ribosomal subunit protein uL24, found in Methanothrix thermoacetophila (strain DSM 6194 / JCM 14653 / NBRC 101360 / PT) (Methanosaeta thermophila).